A 335-amino-acid chain; its full sequence is UPF0353 protein MMAR_2288 (335 aa).

2 helical membrane passes run tryptophan 18–leucine 38 and isoleucine 67–threonine 87. The VWFA domain maps to valine 98–leucine 294. The helical transmembrane segment at methionine 309–isoleucine 329 threads the bilayer.

The protein belongs to the UPF0353 family.

It is found in the cell membrane. The protein is UPF0353 protein MMAR_2288 of Mycobacterium marinum (strain ATCC BAA-535 / M).